The sequence spans 224 residues: Putative carbamate hydrolase RutD (224 aa).

One can recognise an AB hydrolase-1 domain in the interval 14–115 (PVVVLISGLG…TVLVSVNGWL (102 aa)).

This sequence belongs to the AB hydrolase superfamily. Hydrolase RutD family.

The enzyme catalyses carbamate + 2 H(+) = NH4(+) + CO2. Involved in pyrimidine catabolism. May facilitate the hydrolysis of carbamate, a reaction that can also occur spontaneously. The protein is Putative carbamate hydrolase RutD of Shigella dysenteriae serotype 1 (strain Sd197).